Reading from the N-terminus, the 148-residue chain is Snaclec B4 (148 aa).

The signal sequence occupies residues 1–24 (MGRIIFVSFGLLVVFLSLSGTGAA). Disulfide bonds link Cys-27–Cys-38, Cys-55–Cys-144, and Cys-121–Cys-136. The region spanning 34 to 145 (YDQHCYKVFD…CRLLGHFVCK (112 aa)) is the C-type lectin domain.

Belongs to the snaclec family. Heterodimer; disulfide-linked. In terms of tissue distribution, expressed by the venom gland.

It is found in the secreted. Functionally, interferes with one step of hemostasis (modulation of platelet aggregation, or coagulation cascade, for example). In Macrovipera lebetinus (Levantine viper), this protein is Snaclec B4.